The primary structure comprises 247 residues: Probable transcriptional regulatory protein Gura_1416 (247 aa).

It belongs to the TACO1 family.

It localises to the cytoplasm. The polypeptide is Probable transcriptional regulatory protein Gura_1416 (Geotalea uraniireducens (strain Rf4) (Geobacter uraniireducens)).